A 273-amino-acid chain; its full sequence is Glutamate 5-kinase (273 aa).

K15 lines the ATP pocket. Residues S55, D142, and N158 each contribute to the substrate site. Residues 178–179 (SD) and 220–226 (TGGMLSK) each bind ATP.

It belongs to the glutamate 5-kinase family.

It localises to the cytoplasm. The catalysed reaction is L-glutamate + ATP = L-glutamyl 5-phosphate + ADP. The protein operates within amino-acid biosynthesis; L-proline biosynthesis; L-glutamate 5-semialdehyde from L-glutamate: step 1/2. Its function is as follows. Catalyzes the transfer of a phosphate group to glutamate to form L-glutamate 5-phosphate. This chain is Glutamate 5-kinase, found in Streptococcus pyogenes serotype M1.